A 443-amino-acid chain; its full sequence is Glutamyl-tRNA reductase (443 aa).

Residues 49 to 52, S109, 114 to 116, and Q120 contribute to the substrate site; these read TCNR and EQQ. The active-site Nucleophile is C50. NADP(+) is bound at residue 189–194; it reads GAGSMG.

Belongs to the glutamyl-tRNA reductase family. In terms of assembly, homodimer.

The catalysed reaction is (S)-4-amino-5-oxopentanoate + tRNA(Glu) + NADP(+) = L-glutamyl-tRNA(Glu) + NADPH + H(+). It functions in the pathway porphyrin-containing compound metabolism; protoporphyrin-IX biosynthesis; 5-aminolevulinate from L-glutamyl-tRNA(Glu): step 1/2. In terms of biological role, catalyzes the NADPH-dependent reduction of glutamyl-tRNA(Glu) to glutamate 1-semialdehyde (GSA). The polypeptide is Glutamyl-tRNA reductase (Mycobacteroides abscessus (strain ATCC 19977 / DSM 44196 / CCUG 20993 / CIP 104536 / JCM 13569 / NCTC 13031 / TMC 1543 / L948) (Mycobacterium abscessus)).